The sequence spans 105 residues: Integration host factor subunit beta (105 aa).

This sequence belongs to the bacterial histone-like protein family. As to quaternary structure, heterodimer of an alpha and a beta chain.

Functionally, this protein is one of the two subunits of integration host factor, a specific DNA-binding protein that functions in genetic recombination as well as in transcriptional and translational control. In Bradyrhizobium sp. (strain ORS 278), this protein is Integration host factor subunit beta.